Reading from the N-terminus, the 109-residue chain is Nucleoid-associated protein Ldb1634 (109 aa).

The segment at 18 to 40 is disordered; that stretch reads MMKQAKKLQEQMAQEQENITTQE.

This sequence belongs to the YbaB/EbfC family. As to quaternary structure, homodimer.

The protein resides in the cytoplasm. The protein localises to the nucleoid. In terms of biological role, binds to DNA and alters its conformation. May be involved in regulation of gene expression, nucleoid organization and DNA protection. The polypeptide is Nucleoid-associated protein Ldb1634 (Lactobacillus delbrueckii subsp. bulgaricus (strain ATCC 11842 / DSM 20081 / BCRC 10696 / JCM 1002 / NBRC 13953 / NCIMB 11778 / NCTC 12712 / WDCM 00102 / Lb 14)).